We begin with the raw amino-acid sequence, 520 residues long: GMP synthase [glutamine-hydrolyzing] (520 aa).

Residues 9-202 (SVLIVDFGSQ…IHNIAGIKGD (194 aa)) enclose the Glutamine amidotransferase type-1 domain. Catalysis depends on C86, which acts as the Nucleophile. Active-site residues include H176 and E178. The 193-residue stretch at 203-395 (WSMSAYRQKA…LGLPDSFIGR (193 aa)) folds into the GMPS ATP-PPase domain. Residue 230–236 (SGGVDSS) participates in ATP binding.

As to quaternary structure, homodimer.

The enzyme catalyses XMP + L-glutamine + ATP + H2O = GMP + L-glutamate + AMP + diphosphate + 2 H(+). The protein operates within purine metabolism; GMP biosynthesis; GMP from XMP (L-Gln route): step 1/1. Its function is as follows. Catalyzes the synthesis of GMP from XMP. In Rhizobium johnstonii (strain DSM 114642 / LMG 32736 / 3841) (Rhizobium leguminosarum bv. viciae), this protein is GMP synthase [glutamine-hydrolyzing].